The chain runs to 1024 residues: Probable alpha-mannosidase At5g13980 (1024 aa).

An N-terminal signal peptide occupies residues 1–21 (MDLAKFLCWIVLLLGISLVES). An N-linked (GlcNAc...) asparagine glycan is attached at asparagine 27. The Zn(2+) site is built by histidine 46 and aspartate 48. The N-linked (GlcNAc...) asparagine glycan is linked to asparagine 63. Aspartate 168 contributes to the Zn(2+) binding site. Asparagine 278 carries N-linked (GlcNAc...) asparagine glycosylation. Histidine 410 serves as a coordination point for Zn(2+). An intrachain disulfide couples cysteine 461 to cysteine 469. N-linked (GlcNAc...) asparagine glycosylation is found at asparagine 465, asparagine 475, asparagine 637, asparagine 658, asparagine 733, and asparagine 823. The cysteines at positions 827 and 832 are disulfide-linked.

Belongs to the glycosyl hydrolase 38 family. Homodimer. Zn(2+) serves as cofactor.

The enzyme catalyses Hydrolysis of terminal, non-reducing alpha-D-mannose residues in alpha-D-mannosides.. Its function is as follows. Liberates mannose from p-nitrophenyl-alpha-D-mannoside in vitro. The protein is Probable alpha-mannosidase At5g13980 of Arabidopsis thaliana (Mouse-ear cress).